The sequence spans 1010 residues: Ubiquitin conjugation factor E4 (1010 aa).

The segment at 13–70 (AKLQQTNSEANSSKEPKESNIAPEPKKPDLKKRFIGSKATTSNSEQKEISPPVTSGAP) is disordered. Basic and acidic residues predominate over residues 24-44 (SSKEPKESNIAPEPKKPDLKK). The U-box domain maps to 930–1004 (DIPDYFLDPL…NTFLKSKRNK (75 aa)).

It belongs to the ubiquitin conjugation factor E4 family.

It localises to the cytoplasm. Its subcellular location is the nucleus. The protein operates within protein modification; protein ubiquitination. Its function is as follows. E4 ubiquitin chain-elongation enzyme specifically involved in polyubiquitin chain assembly. Binds to cdc48 and elongates mono- and diubiquitinated ERAD substrates presented by the ufd1-npl4-cdc48 (UNC) AAA ATPase complex to a chain length of 4 to 6 ubiquitin moieties. Delivers these polyubiquitinated substrates to downstream ERAD components, which target them to the proteasome. Enhances ubiquitination at 'Lys-48', but not at 'Lys-29' of the Ub moiety. In Schizosaccharomyces pombe (strain 972 / ATCC 24843) (Fission yeast), this protein is Ubiquitin conjugation factor E4 (ufd2).